Consider the following 506-residue polypeptide: Catalase (506 aa).

Active-site residues include His-73 and Asn-146. A heme-binding site is contributed by Tyr-356. The Microbody targeting signal motif lies at 504–506 (SKF).

Belongs to the catalase family. As to quaternary structure, homotetramer. Heme serves as cofactor.

The protein resides in the peroxisome matrix. It catalyses the reaction 2 H2O2 = O2 + 2 H2O. In terms of biological role, catalyzes the degradation of hydrogen peroxide (H(2)O(2)) generated by peroxisomal oxidases to water and oxygen, thereby protecting cells from the toxic effects of hydrogen peroxide. This chain is Catalase (Cat), found in Drosophila melanogaster (Fruit fly).